The sequence spans 1140 residues: DNA damage-binding protein 1 (1140 aa).

Ser2 is modified (N-acetylserine). Residues 2–768 (SYNYVVTAQK…QALSSSVSSS (767 aa)) are interaction with CDT1. The segment at 13-356 (TAVNGCVTGH…VVAMETFTNL (344 aa)) is WD repeat beta-propeller A. The interval 391-708 (RNGIGIHEHA…LTIGTIDEIQ (318 aa)) is WD repeat beta-propeller B; Interaction with CUL4A. The WD repeat beta-propeller C stretch occupies residues 709–1043 (KLHIRTVPLY…NGMIGLVTSL (335 aa)). The tract at residues 771–1140 (FSSSTAPHET…KVVEELTRIH (370 aa)) is interaction with CDT1 and CUL4A. An N6-acetyllysine modification is found at Lys1067. Lys1121 participates in a covalent cross-link: Glycyl lysine isopeptide (Lys-Gly) (interchain with G-Cter in SUMO2). Residue Thr1125 is modified to Phosphothreonine.

The protein belongs to the DDB1 family. In terms of assembly, component of the UV-DDB complex which includes DDB1 and DDB2; the heterodimer dimerizes to give rise to a heterotetramer when bound to damaged DNA. The UV-DDB complex interacts with monoubiquitinated histone H2A and binds to XPC via the DDB2 subunit. Component of numerous DCX (DDB1-CUL4-X-box) E3 ubiquitin-protein ligase complexes which consist of a core of DDB1, CUL4A or CUL4B and RBX1. DDB1 may recruit specific substrate targeting subunits to the DCX complex. These substrate targeting subunits are generally known as DCAF (DDB1- and CUL4-associated factor) or CDW (CUL4-DDB1-associated WD40-repeat) proteins. Interacts with AMBRA1, ATG16L1, BTRC, CRBN, DCAF1, DCAF4, DCAF5, DCAF6, DCAF7, DCAF8, DCAF9, DCAF10, DCAF11, DCAF12, DCAF15, DCAF16, DCAF17, DDA1, DET1, DTL, ERCC8, FBXW5, FBXW8, GRWD1, KATNB1, NLE1, NUP43, PAFAH1B1, PHIP, PWP1, RBBP4, RBBP5, RBBP7, COP1, SNRNP40, DCAF1, WDR5, WDR5B, WDR12, WDR26, WDR39, WDR42, WDR53, WDR59, WDR61, WSB1, WSB2, LRWD1 and WDTC1. DCX complexes may associate with the COP9 signalosome, and this inhibits the E3 ubiquitin-protein ligase activity of the complex. Interacts with NF2, TSC1 and TSC2. Interacts with AGO1 and AGO2. Associates with the E3 ligase complex containing DYRK2, EDD/UBR5, DDB1 and DCAF1 proteins (EDVP complex). Interacts directly with DYRK2. DCX(DTL) complex interacts with FBXO11; does not ubiquitinate and degradate FBXO11. Interacts with TRPC4AP. Interacts with CRY1 and CRY2. The DDB1-CUL4A complex interacts with CRY1. May also interact with DCUN1D1, DCUN1D2, DCUN1D3 and DCUN1D5. Component of the DCX(DCAF13) E3 ubiquitin ligase complex, at least composed of CUL4 (CUL4A or CUL4B), DDB1, DCAF13 and RBX1. Interacts with DCAF13 (via WD40 domain). In terms of processing, phosphorylated by ABL1. Post-translationally, ubiquitinated by CUL4A. Subsequently degraded by ubiquitin-dependent proteolysis. Acetylated, promoting interaction with CUL4 (CUL4A or CUL4B) and subsequent formation of DCX (DDB1-CUL4-X-box) E3 ubiquitin-protein ligase complexes. Deacetylation by SIRT7 impairs the interaction with CUL4 (CUL4A or CUL4B) and formation of DCX (DDB1-CUL4-X-box) E3 ubiquitin-protein ligase complexes.

It is found in the cytoplasm. It localises to the nucleus. It participates in protein modification; protein ubiquitination. In terms of biological role, protein, which is both involved in DNA repair and protein ubiquitination, as part of the UV-DDB complex and DCX (DDB1-CUL4-X-box) complexes, respectively. Core component of the UV-DDB complex (UV-damaged DNA-binding protein complex), a complex that recognizes UV-induced DNA damage and recruit proteins of the nucleotide excision repair pathway (the NER pathway) to initiate DNA repair. The UV-DDB complex preferentially binds to cyclobutane pyrimidine dimers (CPD), 6-4 photoproducts (6-4 PP), apurinic sites and short mismatches. Also functions as a component of numerous distinct DCX (DDB1-CUL4-X-box) E3 ubiquitin-protein ligase complexes which mediate the ubiquitination and subsequent proteasomal degradation of target proteins. The functional specificity of the DCX E3 ubiquitin-protein ligase complex is determined by the variable substrate recognition component recruited by DDB1. DCX(DDB2) (also known as DDB1-CUL4-ROC1, CUL4-DDB-ROC1 and CUL4-DDB-RBX1) may ubiquitinate histone H2A, histone H3 and histone H4 at sites of UV-induced DNA damage. The ubiquitination of histones may facilitate their removal from the nucleosome and promote subsequent DNA repair. DCX(DDB2) also ubiquitinates XPC, which may enhance DNA-binding by XPC and promote NER. DCX(DTL) plays a role in PCNA-dependent polyubiquitination of CDT1 and MDM2-dependent ubiquitination of TP53 in response to radiation-induced DNA damage and during DNA replication. DCX(ERCC8) (the CSA complex) plays a role in transcription-coupled repair (TCR). The DDB1-CUL4A-DTL E3 ligase complex regulates the circadian clock function by mediating the ubiquitination and degradation of CRY1. DDB1-mediated CRY1 degradation promotes FOXO1 protein stability and FOXO1-mediated gluconeogenesis in the liver. By acting on TET dioxygenses, essential for oocyte maintenance at the primordial follicle stage, hence essential for female fertility. Maternal factor required for proper zygotic genome activation and genome reprogramming. This chain is DNA damage-binding protein 1 (DDB1), found in Bos taurus (Bovine).